We begin with the raw amino-acid sequence, 427 residues long: Enolase (427 aa).

Gln-162 is a binding site for (2R)-2-phosphoglycerate. The Proton donor role is filled by Glu-204. Mg(2+) contacts are provided by Asp-241, Glu-282, and Asp-309. Lys-334, Arg-363, Ser-364, and Lys-385 together coordinate (2R)-2-phosphoglycerate. The active-site Proton acceptor is the Lys-334.

Belongs to the enolase family. Mg(2+) is required as a cofactor.

Its subcellular location is the cytoplasm. It is found in the secreted. The protein localises to the cell surface. The catalysed reaction is (2R)-2-phosphoglycerate = phosphoenolpyruvate + H2O. The protein operates within carbohydrate degradation; glycolysis; pyruvate from D-glyceraldehyde 3-phosphate: step 4/5. In terms of biological role, catalyzes the reversible conversion of 2-phosphoglycerate (2-PG) into phosphoenolpyruvate (PEP). It is essential for the degradation of carbohydrates via glycolysis. In Frankia casuarinae (strain DSM 45818 / CECT 9043 / HFP020203 / CcI3), this protein is Enolase.